Reading from the N-terminus, the 251-residue chain is N-acetylmuramoyl-L-alanine amidase CwlA (251 aa).

The signal sequence occupies residues 1–37 (MEIKQMLVPVSRYSVLCPYEMNPTEITFHNTYNDAPA). Residues 38-140 (INERNNVANN…QERNGKYCPH (103 aa)) enclose the N-acetylmuramoyl-L-alanine amidase domain.

The protein belongs to the N-acetylmuramoyl-L-alanine amidase 2 family.

The protein localises to the secreted. It catalyses the reaction Hydrolyzes the link between N-acetylmuramoyl residues and L-amino acid residues in certain cell-wall glycopeptides.. Its function is as follows. Autolysins are involved in some important biological processes such as cell separation, cell-wall turnover, competence for genetic transformation, formation of the flagella and sporulation. This chain is N-acetylmuramoyl-L-alanine amidase CwlA (cwlA), found in Bacillus sp.